The primary structure comprises 423 residues: UDP-N-acetylglucosamine 1-carboxyvinyltransferase (423 aa).

Residue 22-23 (KN) coordinates phosphoenolpyruvate. Arg-98 is a UDP-N-acetyl-alpha-D-glucosamine binding site. The Proton donor role is filled by Cys-122. Cys-122 is modified (2-(S-cysteinyl)pyruvic acid O-phosphothioketal). UDP-N-acetyl-alpha-D-glucosamine contacts are provided by residues 127–131 (RPVDQ), Asp-311, and Ile-333.

It belongs to the EPSP synthase family. MurA subfamily.

It is found in the cytoplasm. The catalysed reaction is phosphoenolpyruvate + UDP-N-acetyl-alpha-D-glucosamine = UDP-N-acetyl-3-O-(1-carboxyvinyl)-alpha-D-glucosamine + phosphate. Its pathway is cell wall biogenesis; peptidoglycan biosynthesis. Functionally, cell wall formation. Adds enolpyruvyl to UDP-N-acetylglucosamine. This is UDP-N-acetylglucosamine 1-carboxyvinyltransferase from Stenotrophomonas maltophilia (strain R551-3).